The primary structure comprises 388 residues: Succinate--CoA ligase [ADP-forming] subunit beta (388 aa).

The 236-residue stretch at 9–244 (KSLFAEYGLP…PSQDDAREAH (236 aa)) folds into the ATP-grasp domain. ATP contacts are provided by residues K46, 53-55 (GRG), E99, T102, and E107. N199 and D213 together coordinate Mg(2+). Residues N264 and 321 to 323 (GIV) each bind substrate.

Belongs to the succinate/malate CoA ligase beta subunit family. As to quaternary structure, heterotetramer of two alpha and two beta subunits. It depends on Mg(2+) as a cofactor.

It carries out the reaction succinate + ATP + CoA = succinyl-CoA + ADP + phosphate. The enzyme catalyses GTP + succinate + CoA = succinyl-CoA + GDP + phosphate. The protein operates within carbohydrate metabolism; tricarboxylic acid cycle; succinate from succinyl-CoA (ligase route): step 1/1. In terms of biological role, succinyl-CoA synthetase functions in the citric acid cycle (TCA), coupling the hydrolysis of succinyl-CoA to the synthesis of either ATP or GTP and thus represents the only step of substrate-level phosphorylation in the TCA. The beta subunit provides nucleotide specificity of the enzyme and binds the substrate succinate, while the binding sites for coenzyme A and phosphate are found in the alpha subunit. This Shewanella frigidimarina (strain NCIMB 400) protein is Succinate--CoA ligase [ADP-forming] subunit beta.